We begin with the raw amino-acid sequence, 466 residues long: Soluble pyridine nucleotide transhydrogenase (466 aa).

An FAD-binding site is contributed by 36–45 (ERYQNVGGGC).

This sequence belongs to the class-I pyridine nucleotide-disulfide oxidoreductase family. Homooligomer; probable homooctamer. Requires FAD as cofactor.

Its subcellular location is the cytoplasm. It catalyses the reaction NAD(+) + NADPH = NADH + NADP(+). Conversion of NADPH, generated by peripheral catabolic pathways, to NADH, which can enter the respiratory chain for energy generation. This chain is Soluble pyridine nucleotide transhydrogenase, found in Escherichia coli O157:H7.